The sequence spans 318 residues: MSEILFFSPQPLFSHMMNKNSRLHTHSNIKNTFFSEIGIGISGNSFLLLFHILKFIRGHRPRLTDLPIGLLSLIHLLMLLLMAFIATDIFISRRGWDGIICKFLVYLYGVLRGLSLCTTSMLSVLQAIILSPRSSCLAKLKHKSPHHISCAIIFLSVLYMLISSHILLSITATPNLTMNDFLYVSQSCSLLPLSYLVQSMYSTLLALREVFLISLMVLSTLYMVVLLCRHRKQAQHLQGTSLSPKASAEQRATQTILMLMTFFVLMSIFDSIVSCSRTMFLDDPTSYSIHIFVMHIYATVSPFVFMSTEKHIVNILRG.

At 1 to 32 (MSEILFFSPQPLFSHMMNKNSRLHTHSNIKNT) the chain is on the extracellular side. Residues 33 to 53 (FFSEIGIGISGNSFLLLFHIL) form a helical membrane-spanning segment. Topologically, residues 54 to 65 (KFIRGHRPRLTD) are cytoplasmic. The chain crosses the membrane as a helical span at residues 66-86 (LPIGLLSLIHLLMLLLMAFIA). Residues 87-101 (TDIFISRRGWDGIIC) lie on the Extracellular side of the membrane. Cys-101 and Cys-188 are joined by a disulfide. Residues 102 to 118 (KFLVYLYGVLRGLSLCT) traverse the membrane as a helical segment. Over 119-147 (TSMLSVLQAIILSPRSSCLAKLKHKSPHH) the chain is Cytoplasmic. Residues 148 to 168 (ISCAIIFLSVLYMLISSHILL) form a helical membrane-spanning segment. Over 169–206 (SITATPNLTMNDFLYVSQSCSLLPLSYLVQSMYSTLLA) the chain is Extracellular. N-linked (GlcNAc...) asparagine glycosylation is present at Asn-175. Residues 207–227 (LREVFLISLMVLSTLYMVVLL) form a helical membrane-spanning segment. Residues 228–254 (CRHRKQAQHLQGTSLSPKASAEQRATQ) are Cytoplasmic-facing. A helical membrane pass occupies residues 255–275 (TILMLMTFFVLMSIFDSIVSC). The Extracellular portion of the chain corresponds to 276 to 285 (SRTMFLDDPT). Residues 286 to 306 (SYSIHIFVMHIYATVSPFVFM) form a helical membrane-spanning segment. Residues 307 to 318 (STEKHIVNILRG) are Cytoplasmic-facing.

This sequence belongs to the G-protein coupled receptor 1 family.

Its subcellular location is the cell membrane. Its function is as follows. Putative pheromone receptor implicated in the regulation of social and reproductive behavior. The sequence is that of Vomeronasal type-1 receptor A11 from Mus musculus (Mouse).